We begin with the raw amino-acid sequence, 338 residues long: uncharacterized protein (338 aa).

Positions 1–29 (MIKQLYKNITICTLALSTTFTVLPATSYA) are cleaved as a signal peptide.

This sequence belongs to the aerolysin family.

This is an uncharacterized protein from Staphylococcus aureus (strain MSSA476).